A 1074-amino-acid chain; its full sequence is Transmembrane protein 132E (1074 aa).

An N-terminal signal peptide occupies residues 1–25 (MAPGMSGRGGAALLCLSALLAHASG). Residues 26 to 893 (RSHPASPSPP…LTDLEIGMYA (868 aa)) lie on the Extracellular side of the membrane. N-linked (GlcNAc...) asparagine glycosylation is found at Asn70 and Asn91. Disordered regions lie at residues 202–226 (PPAPAAPPTARRKSPDGLEPEATGE) and 241–264 (ASGGCGGSRRGAGPGVGARAESPT). A compositionally biased stretch (gly residues) spans 243-256 (GGCGGSRRGAGPGV). Asn318 and Asn399 each carry an N-linked (GlcNAc...) asparagine glycan. Disordered regions lie at residues 563 to 585 (RSVRESEDEDEEEEERRQSASRG) and 814 to 867 (GRDE…VPPT). Residues 841-862 (GAGPPGSALPAPEAPGPGTASP) are compositionally biased toward low complexity. Residues 894–914 (LLGVFCLAILVFLINCIVFVL) form a helical membrane-spanning segment. Residues 915–1074 (RYRHKRIPPE…NYMRRIKEIA (160 aa)) lie on the Cytoplasmic side of the membrane. Residues 946 to 1063 (VQGELSPPAG…PTRPTAPPDL (118 aa)) form a disordered region. A compositionally biased stretch (low complexity) spans 972–984 (SGSSQTSVQSQVH). Residues 1034–1044 (GEEDEEEEEDL) show a composition bias toward acidic residues.

The protein belongs to the TMEM132 family.

It is found in the membrane. Functionally, required for normal inner ear hair cell function and hearing. This chain is Transmembrane protein 132E, found in Homo sapiens (Human).